Reading from the N-terminus, the 516-residue chain is MAQINNMAQGIQTLNPNSNFHKPQVPKSSSFLVFGSKKLKNSANSMLVLKKDSIFMQKFCSFRISASVATAQKPSEIVLQPIKEISGTVKLPGSKSLSNRILLLAALSEGTTVVDNLLSSDDIHYMLGALKTLGLHVEEDSANQRAVVEGCGGLFPVGKESKEEIQLFLGNAGTAMRPLTAAVTVAGGNSRYVLDGVPRMRERPISDLVDGLKQLGAEVDCFLGTKCPPVRIVSKGGLPGGKVKLSGSISSQYLTALLMAAPLALGDVEIEIIDKLISVPYVEMTLKLMERFGISVEHSSSWDRFFVRGGQKYKSPGKAFVEGDASSASYFLAGAAVTGGTITVEGCGTNSLQGDVKFAEVLEKMGAEVTWTENSVTVKGPPRSSSGRKHLRAIDVNMNKMPDVAMTLAVVALYADGPTAIRDVASWRVKETERMIAICTELRKLGATVEEGPDYCIITPPEKLNVTDIDTYDDHRMAMAFSLAACADVPVTINDPGCTRKTFPNYFDVLQQYSKH.

The N-terminal 72 residues, 1–72 (MAQINNMAQG…RISASVATAQ (72 aa)), are a transit peptide targeting the chloroplast. Lys95, Ser96, and Arg100 together coordinate 3-phosphoshikimate. A phosphoenolpyruvate-binding site is contributed by Lys95. Phosphoenolpyruvate-binding residues include Gly173 and Arg203. 6 residues coordinate 3-phosphoshikimate: Ser250, Ser251, Gln252, Ser278, Asp403, and Lys430. Phosphoenolpyruvate is bound at residue Gln252. Asp403 serves as the catalytic Proton acceptor. Arg434, Arg476, and Lys501 together coordinate phosphoenolpyruvate.

This sequence belongs to the EPSP synthase family. As to expression, mostly expressed in flower petals, and, to a lower extent, in roots, stems and anthers, but barely in leaves.

It localises to the plastid. It is found in the chloroplast. The enzyme catalyses 3-phosphoshikimate + phosphoenolpyruvate = 5-O-(1-carboxyvinyl)-3-phosphoshikimate + phosphate. It participates in metabolic intermediate biosynthesis; chorismate biosynthesis; chorismate from D-erythrose 4-phosphate and phosphoenolpyruvate: step 6/7. Competitively inhibited by glyphosate. Its function is as follows. Catalyzes the transfer of the enolpyruvyl moiety of phosphoenolpyruvate (PEP) to the 5-hydroxyl of shikimate-3-phosphate (S3P) to produce enolpyruvyl shikimate-3-phosphate and inorganic phosphate. Involved in the accumulation of volatile benzoides in flowers, scent attracting pollinators (e.g. the night-active hawkmoth pollinator Manduca sexta). The protein is 3-phosphoshikimate 1-carboxyvinyltransferase, chloroplastic of Petunia hybrida (Petunia).